A 201-amino-acid chain; its full sequence is Histidine biosynthesis bifunctional protein HisIE (201 aa).

The tract at residues 1–114 (MLTAQQIEKL…FAPAQTEWGF (114 aa)) is phosphoribosyl-AMP cyclohydrolase. The interval 115–201 (LYQLEKLLAS…SCVIRRLRER (87 aa)) is phosphoribosyl-ATP pyrophosphohydrolase.

It in the N-terminal section; belongs to the PRA-CH family. In the C-terminal section; belongs to the PRA-PH family.

It is found in the cytoplasm. The catalysed reaction is 1-(5-phospho-beta-D-ribosyl)-ATP + H2O = 1-(5-phospho-beta-D-ribosyl)-5'-AMP + diphosphate + H(+). The enzyme catalyses 1-(5-phospho-beta-D-ribosyl)-5'-AMP + H2O = 1-(5-phospho-beta-D-ribosyl)-5-[(5-phospho-beta-D-ribosylamino)methylideneamino]imidazole-4-carboxamide. Its pathway is amino-acid biosynthesis; L-histidine biosynthesis; L-histidine from 5-phospho-alpha-D-ribose 1-diphosphate: step 2/9. It participates in amino-acid biosynthesis; L-histidine biosynthesis; L-histidine from 5-phospho-alpha-D-ribose 1-diphosphate: step 3/9. The chain is Histidine biosynthesis bifunctional protein HisIE from Photorhabdus laumondii subsp. laumondii (strain DSM 15139 / CIP 105565 / TT01) (Photorhabdus luminescens subsp. laumondii).